The chain runs to 130 residues: Phosphoribosyl-AMP cyclohydrolase (130 aa).

Asp78 serves as a coordination point for Mg(2+). Cys79 is a Zn(2+) binding site. Mg(2+) contacts are provided by Asp80 and Asp82. Residues Cys96 and Cys103 each coordinate Zn(2+).

Belongs to the PRA-CH family. Homodimer. The cofactor is Mg(2+). It depends on Zn(2+) as a cofactor.

Its subcellular location is the cytoplasm. It catalyses the reaction 1-(5-phospho-beta-D-ribosyl)-5'-AMP + H2O = 1-(5-phospho-beta-D-ribosyl)-5-[(5-phospho-beta-D-ribosylamino)methylideneamino]imidazole-4-carboxamide. The protein operates within amino-acid biosynthesis; L-histidine biosynthesis; L-histidine from 5-phospho-alpha-D-ribose 1-diphosphate: step 3/9. Functionally, catalyzes the hydrolysis of the adenine ring of phosphoribosyl-AMP. This chain is Phosphoribosyl-AMP cyclohydrolase, found in Nitrosospira multiformis (strain ATCC 25196 / NCIMB 11849 / C 71).